The following is a 307-amino-acid chain: Thioredoxin-related transmembrane protein 2-B (307 aa).

The signal sequence occupies residues 1–19 (MALLTPLFAFLYHLPQVYK). Residues 20 to 111 (WLLKPYYIAS…VILFFRLDIR (92 aa)) are Extracellular-facing. The chain crosses the membrane as a helical span at residues 112–132 (LGLLYLTLCIVFLMTCKPPLY). The Thioredoxin domain maps to 132–269 (YMGPEYIKYF…LYQKSKKLGK (138 aa)). The Cytoplasmic portion of the chain corresponds to 133–307 (MGPEYIKYFS…AMDTESKKDK (175 aa)). The interval 268-307 (GKTKEKLERPSELVFSTVPEEEEPEAETISAMDTESKKDK) is disordered. Basic and acidic residues predominate over residues 269–278 (KTKEKLERPS). The Di-lysine motif motif lies at 304 to 307 (KKDK).

In terms of assembly, monomer. Homodimer; disulfide-linked. Occurs in both reduced and oxidized monomeric form. Oxidative conditions increase homodimerization.

It is found in the endoplasmic reticulum membrane. Its subcellular location is the mitochondrion membrane. Its function is as follows. Endoplasmic reticulum and mitochondria-associated protein that probably functions as a regulator of cellular redox state and thereby regulates protein post-translational modification, protein folding and mitochondrial activity. The polypeptide is Thioredoxin-related transmembrane protein 2-B (tmx2b) (Danio rerio (Zebrafish)).